Consider the following 482-residue polypeptide: Protein translocase subunit SecY (482 aa).

A disordered region spans residues 1–22 (MVIKKPANKVDKKSTFKSSNKK). A run of 10 helical transmembrane segments spans residues 41 to 61 (ILFT…TVPG), 92 to 112 (FSIL…VQLL), 137 to 157 (LTKI…IFTL), 177 to 197 (AFYY…MLWI), 201 to 221 (ITIK…IIIS), 243 to 263 (IFFS…LVIL), 303 to 323 (VIPV…SQII), 342 to 362 (FNTW…TFLY), 405 to 425 (VVGS…SKLT), and 426 to 446 (QLPS…SVAI).

This sequence belongs to the SecY/SEC61-alpha family. In terms of assembly, component of the Sec protein translocase complex. Heterotrimer consisting of SecY, SecE and SecG subunits. The heterotrimers can form oligomers, although 1 heterotrimer is thought to be able to translocate proteins. Interacts with the ribosome. Interacts with SecDF, and other proteins may be involved. Interacts with SecA.

The protein resides in the cell membrane. Its function is as follows. The central subunit of the protein translocation channel SecYEG. Consists of two halves formed by TMs 1-5 and 6-10. These two domains form a lateral gate at the front which open onto the bilayer between TMs 2 and 7, and are clamped together by SecE at the back. The channel is closed by both a pore ring composed of hydrophobic SecY resides and a short helix (helix 2A) on the extracellular side of the membrane which forms a plug. The plug probably moves laterally to allow the channel to open. The ring and the pore may move independently. The protein is Protein translocase subunit SecY of Mycoplasma capricolum subsp. capricolum (strain California kid / ATCC 27343 / NCTC 10154).